A 68-amino-acid polypeptide reads, in one-letter code: Large ribosomal subunit protein bL32 (68 aa).

The interval 1-20 (MAVPQNRVTRSRRNMRRSHD) is disordered.

Belongs to the bacterial ribosomal protein bL32 family.

This is Large ribosomal subunit protein bL32 from Cereibacter sphaeroides (strain ATCC 17029 / ATH 2.4.9) (Rhodobacter sphaeroides).